A 1800-amino-acid polypeptide reads, in one-letter code: U3 small nucleolar RNA-associated protein 10 (1800 aa).

2 HEAT repeats span residues 426–467 (FTQS…TTPA) and 581–619 (DVDL…LYKK). 2 consecutive transmembrane segments (helical) span residues 944-964 (IQSG…AIVN) and 1000-1020 (ALLL…HSVM). HEAT repeat units follow at residues 1043-1081 (DQTI…AFEH), 1250-1288 (TLSL…QNPE), 1294-1333 (QHRM…KYGR), and 1755-1793 (LALL…VLGE).

Belongs to the HEATR1/UTP10 family. As to quaternary structure, component of the ribosomal small subunit (SSU) processome.

The protein localises to the nucleus. It localises to the nucleolus. Its subcellular location is the membrane. Its function is as follows. Involved in nucleolar processing of pre-18S ribosomal RNA. Involved in ribosome biosynthesis. In Aspergillus niger (strain ATCC MYA-4892 / CBS 513.88 / FGSC A1513), this protein is U3 small nucleolar RNA-associated protein 10.